The chain runs to 184 residues: ATP synthase subunit b, chloroplastic (184 aa).

A helical membrane pass occupies residues 27–49 (LATNLINLSVVLGVLIFFGKGVL).

This sequence belongs to the ATPase B chain family. F-type ATPases have 2 components, F(1) - the catalytic core - and F(0) - the membrane proton channel. F(1) has five subunits: alpha(3), beta(3), gamma(1), delta(1), epsilon(1). F(0) has four main subunits: a(1), b(1), b'(1) and c(10-14). The alpha and beta chains form an alternating ring which encloses part of the gamma chain. F(1) is attached to F(0) by a central stalk formed by the gamma and epsilon chains, while a peripheral stalk is formed by the delta, b and b' chains.

It is found in the plastid. It localises to the chloroplast thylakoid membrane. F(1)F(0) ATP synthase produces ATP from ADP in the presence of a proton or sodium gradient. F-type ATPases consist of two structural domains, F(1) containing the extramembraneous catalytic core and F(0) containing the membrane proton channel, linked together by a central stalk and a peripheral stalk. During catalysis, ATP synthesis in the catalytic domain of F(1) is coupled via a rotary mechanism of the central stalk subunits to proton translocation. Its function is as follows. Component of the F(0) channel, it forms part of the peripheral stalk, linking F(1) to F(0). In Nymphaea alba (White water-lily), this protein is ATP synthase subunit b, chloroplastic.